We begin with the raw amino-acid sequence, 299 residues long: NEDD8-activating enzyme E1 catalytic subunit (299 aa).

An ATP-binding site is contributed by Gly12–Thr37. Catalysis depends on Cys168, which acts as the Glycyl thioester intermediate.

The protein belongs to the ubiquitin-activating E1 family. UBA3 subfamily. In terms of assembly, heterodimer of UBA3 and ULA1. Interacts with NEDD8 and UBC12.

The catalysed reaction is ATP + [NEDD8 protein] + [E1 NEDD8-activating enzyme]-L-cysteine = AMP + diphosphate + [E1 NEDD8-activating enzyme]-S-[NEDD8 protein]-yl-L-cysteine.. Its pathway is protein modification; protein neddylation. Its function is as follows. Catalytic subunit of the dimeric UBA3-ULA1 E1 enzyme. E1 activates NEDD8/RUB1 by first adenylating its C-terminal glycine residue with ATP, thereafter linking this residue to the side chain of the catalytic cysteine, yielding a NEDD8-UBA3 thioester and free AMP. E1 finally transfers NEDD8 to the catalytic cysteine of UBC12. The protein is NEDD8-activating enzyme E1 catalytic subunit (UBA3) of Saccharomyces cerevisiae (strain ATCC 204508 / S288c) (Baker's yeast).